A 177-amino-acid polypeptide reads, in one-letter code: Peptide deformylase (177 aa).

Cys-98 and His-140 together coordinate Fe cation. Glu-141 is a catalytic residue. His-144 contacts Fe cation.

The protein belongs to the polypeptide deformylase family. Requires Fe(2+) as cofactor.

The enzyme catalyses N-terminal N-formyl-L-methionyl-[peptide] + H2O = N-terminal L-methionyl-[peptide] + formate. Its function is as follows. Removes the formyl group from the N-terminal Met of newly synthesized proteins. Requires at least a dipeptide for an efficient rate of reaction. N-terminal L-methionine is a prerequisite for activity but the enzyme has broad specificity at other positions. This is Peptide deformylase from Zymomonas mobilis subsp. mobilis (strain ATCC 31821 / ZM4 / CP4).